We begin with the raw amino-acid sequence, 858 residues long: Protein translocase subunit SecA (858 aa).

ATP contacts are provided by residues glutamine 88, 106 to 110, and aspartate 494; that span reads GEGKT. The interval 808–848 is disordered; it reads KEDRGQLSYSGGGNAEDARNTPAKAAPRIGRNDPCPCGSGR. Residues cysteine 842, cysteine 844, cysteine 853, and cysteine 854 each coordinate Zn(2+).

The protein belongs to the SecA family. In terms of assembly, monomer and homodimer. Part of the essential Sec protein translocation apparatus which comprises SecA, SecYEG and auxiliary proteins SecDF-YajC and YidC. Zn(2+) serves as cofactor.

The protein resides in the cell inner membrane. It is found in the cytoplasm. It carries out the reaction ATP + H2O + cellular proteinSide 1 = ADP + phosphate + cellular proteinSide 2.. In terms of biological role, part of the Sec protein translocase complex. Interacts with the SecYEG preprotein conducting channel. Has a central role in coupling the hydrolysis of ATP to the transfer of proteins into and across the cell membrane, serving as an ATP-driven molecular motor driving the stepwise translocation of polypeptide chains across the membrane. The polypeptide is Protein translocase subunit SecA (Desulfovibrio desulfuricans (strain ATCC 27774 / DSM 6949 / MB)).